The sequence spans 297 residues: uncharacterized protein (297 aa).

2 helical membrane-spanning segments follow: residues 17 to 37 and 48 to 68; these read LALS…KEIF and TISG…GYSI. In terms of domain architecture, PNPLA spans 17–196; sequence LALSGGGFYG…TLNYPITLFD (180 aa). Positions 21-26 match the GXGXXG motif; that stretch reads GGGFYG. Positions 51 to 55 match the GXSXG motif; sequence GVSVG. The Nucleophile role is filled by Ser-53. N-linked (GlcNAc...) asparagine; by host glycosylation occurs at Asn-122. Asp-183 serves as the catalytic Proton acceptor. Positions 183–185 match the DGA/G motif; that stretch reads DGG. N-linked (GlcNAc...) asparagine; by host glycosylation is present at Asn-239.

It is found in the membrane. Its function is as follows. Probable lipid hydrolase. This is an uncharacterized protein from Acanthamoeba polyphaga mimivirus (APMV).